The sequence spans 226 residues: Thiocyanate methyltransferase 1 (226 aa).

Positions 35, 39, 46, and 73 each coordinate S-adenosyl-L-methionine. Ser-85 carries the phosphoserine modification. S-adenosyl-L-methionine-binding positions include Asp-94, 122-123 (DF), and Tyr-138.

This sequence belongs to the class I-like SAM-binding methyltransferase superfamily. TPMT family. As to expression, ubiquitous.

The enzyme catalyses thiocyanate + S-adenosyl-L-methionine = methyl thiocyanate + S-adenosyl-L-homocysteine. S-adenosyl-L-methionine-dependent methyltransferase. Probably involved in glucosinolate metabolism and defense against phytopathogens. Highly reactive to thiocyanate (NCS(-)) derived from myrosinase-mediated hydrolysis of glucosinolates upon tissue damage. Also accepts halid ions as substrates with a lower affinity. The chain is Thiocyanate methyltransferase 1 (TMT1) from Brassica oleracea (Wild cabbage).